Here is a 188-residue protein sequence, read N- to C-terminus: Elongation factor P (188 aa).

Belongs to the elongation factor P family.

The protein resides in the cytoplasm. The protein operates within protein biosynthesis; polypeptide chain elongation. In terms of biological role, involved in peptide bond synthesis. Stimulates efficient translation and peptide-bond synthesis on native or reconstituted 70S ribosomes in vitro. Probably functions indirectly by altering the affinity of the ribosome for aminoacyl-tRNA, thus increasing their reactivity as acceptors for peptidyl transferase. In Aeromonas salmonicida (strain A449), this protein is Elongation factor P.